The following is a 262-amino-acid chain: Sepiapterin reductase (262 aa).

An N-acetylmethionine modification is found at Met1. Residue 15–21 (GASRGFG) coordinates NADP(+). Ser33 carries the post-translational modification Phosphoserine. 43-44 (RS) contributes to the NADP(+) binding site. Ser46 is modified (phosphoserine; by CaMK2; in vitro). An NADP(+)-binding site is contributed by 70 to 71 (DL). Residues 158-159 (SL) and Tyr171 each bind substrate. Lys175 is a binding site for NADP(+). Phosphoserine; by CaMK2; in vitro is present on Ser196. Residue Gly200 coordinates substrate. Residue 202 to 207 (LDTNMQ) coordinates NADP(+). The residue at position 214 (Ser214) is a Phosphoserine; by CaMK2; in vitro. Asp258 lines the substrate pocket.

The protein belongs to the sepiapterin reductase family. In terms of assembly, homodimer. Post-translationally, in vitro phosphorylation of Ser-46, Ser-196 and Ser-214 by CaMK2 does not change kinetic parameters.

It localises to the cytoplasm. It catalyses the reaction L-erythro-7,8-dihydrobiopterin + NADP(+) = L-sepiapterin + NADPH + H(+). The catalysed reaction is (6R)-L-erythro-5,6,7,8-tetrahydrobiopterin + 2 NADP(+) = 6-pyruvoyl-5,6,7,8-tetrahydropterin + 2 NADPH + 2 H(+). Functionally, catalyzes the final one or two reductions in tetra-hydrobiopterin biosynthesis to form 5,6,7,8-tetrahydrobiopterin. This chain is Sepiapterin reductase (Spr), found in Rattus norvegicus (Rat).